The sequence spans 84 residues: Small ribosomal subunit protein eS27-like (84 aa).

A compositionally biased stretch (basic and acidic residues) spans 1-16 (MPLARDLLHPSLDEEK). Residues 1-23 (MPLARDLLHPSLDEEKKKHKKKR) are disordered. The C4-type zinc-finger motif lies at 38 to 60 (PGCYKITTVFSHAQTVVLCVGCS).

Belongs to the eukaryotic ribosomal protein eS27 family. Zn(2+) is required as a cofactor.

The sequence is that of Small ribosomal subunit protein eS27-like (RPS27L) from Bos taurus (Bovine).